A 236-amino-acid chain; its full sequence is Ribonuclease P protein component 3 (236 aa).

The protein belongs to the eukaryotic/archaeal RNase P protein component 3 family. As to quaternary structure, consists of a catalytic RNA component and at least 4-5 protein subunits.

It is found in the cytoplasm. It catalyses the reaction Endonucleolytic cleavage of RNA, removing 5'-extranucleotides from tRNA precursor.. In terms of biological role, part of ribonuclease P, a protein complex that generates mature tRNA molecules by cleaving their 5'-ends. This is Ribonuclease P protein component 3 from Natronomonas pharaonis (strain ATCC 35678 / DSM 2160 / CIP 103997 / JCM 8858 / NBRC 14720 / NCIMB 2260 / Gabara) (Halobacterium pharaonis).